The following is a 724-amino-acid chain: Membrane protein YdfJ (724 aa).

12 helical membrane passes run 17-37 (IKAI…AVTL), 179-199 (IVGI…LLIA), 200-220 (GLPI…VLIG), 231-251 (LSLA…FIFT), 277-297 (AVVF…VVNI), 309-329 (LSVL…LSIA), 360-380 (IMLS…SMHL), 512-532 (AIPV…TIVF), 539-559 (LVAV…CVFV), 575-595 (GPIL…LAMD), 627-647 (PVVT…IFAG), and 655-675 (GLAL…TLIP).

The protein belongs to the resistance-nodulation-cell division (RND) (TC 2.A.6) family. MmpL subfamily.

It is found in the cell membrane. This chain is Membrane protein YdfJ (ydfJ), found in Bacillus subtilis (strain 168).